A 181-amino-acid polypeptide reads, in one-letter code: Interleukin-10 (181 aa).

The first 19 residues, 1-19 (MHGSALLCCCLVLLAGVGA), serve as a signal peptide directing secretion. Disulfide bonds link C31–C129 and C81–C135. N-linked (GlcNAc...) asparagine glycosylation occurs at N137.

Belongs to the IL-10 family. Homodimer. Interacts with IL10RA and IL10RB.

The protein resides in the secreted. Major immune regulatory cytokine that acts on many cells of the immune system where it has profound anti-inflammatory functions, limiting excessive tissue disruption caused by inflammation. Mechanistically, IL10 binds to its heterotetrameric receptor comprising IL10RA and IL10RB leading to JAK1 and STAT2-mediated phosphorylation of STAT3. In turn, STAT3 translocates to the nucleus where it drives expression of anti-inflammatory mediators. Targets antigen-presenting cells (APCs) such as macrophages and monocytes and inhibits their release of pro-inflammatory cytokines including granulocyte-macrophage colony-stimulating factor /GM-CSF, granulocyte colony-stimulating factor/G-CSF, IL-1 alpha, IL-1 beta, IL-6, IL-8 and TNF-alpha. Also interferes with antigen presentation by reducing the expression of MHC-class II and co-stimulatory molecules, thereby inhibiting their ability to induce T cell activation. In addition, controls the inflammatory response of macrophages by reprogramming essential metabolic pathways including mTOR signaling. This is Interleukin-10 (IL10) from Canis lupus familiaris (Dog).